Consider the following 191-residue polypeptide: Phosphoheptose isomerase (191 aa).

In terms of domain architecture, SIS spans Ile-37 to Leu-191. Residue Asn-52–Gly-54 participates in substrate binding. 2 residues coordinate Zn(2+): His-61 and Glu-65. Residues Glu-65, Asn-93 to Asp-94, Ser-119 to Ser-121, Ser-124, and Gln-172 each bind substrate. Residues Gln-172 and His-180 each contribute to the Zn(2+) site.

It belongs to the SIS family. GmhA subfamily. It depends on Zn(2+) as a cofactor.

Its subcellular location is the cytoplasm. The catalysed reaction is 2 D-sedoheptulose 7-phosphate = D-glycero-alpha-D-manno-heptose 7-phosphate + D-glycero-beta-D-manno-heptose 7-phosphate. The protein operates within carbohydrate biosynthesis; D-glycero-D-manno-heptose 7-phosphate biosynthesis; D-glycero-alpha-D-manno-heptose 7-phosphate and D-glycero-beta-D-manno-heptose 7-phosphate from sedoheptulose 7-phosphate: step 1/1. In terms of biological role, catalyzes the isomerization of sedoheptulose 7-phosphate in D-glycero-D-manno-heptose 7-phosphate. The protein is Phosphoheptose isomerase of Cytophaga hutchinsonii (strain ATCC 33406 / DSM 1761 / CIP 103989 / NBRC 15051 / NCIMB 9469 / D465).